Consider the following 277-residue polypeptide: tRNA uridine(34) hydroxylase (277 aa).

Residues 126-221 (SSPDVHVIDT…YLETVRGDDS (96 aa)) form the Rhodanese domain. Cys-181 acts as the Cysteine persulfide intermediate in catalysis.

This sequence belongs to the TrhO family.

It carries out the reaction uridine(34) in tRNA + AH2 + O2 = 5-hydroxyuridine(34) in tRNA + A + H2O. Functionally, catalyzes oxygen-dependent 5-hydroxyuridine (ho5U) modification at position 34 in tRNAs. The polypeptide is tRNA uridine(34) hydroxylase (Anaplasma marginale (strain Florida)).